A 383-amino-acid polypeptide reads, in one-letter code: Guanine nucleotide-binding protein alpha-1 subunit (383 aa).

Positions 1-20 (MGLLCSRSRHHTEDTDENTQ) are disordered. Gly2 carries N-myristoyl glycine lipidation. Cys5 carries S-palmitoyl cysteine lipidation. Positions 37 to 383 (HIRKLLLLGA…RRNLLEAGLL (347 aa)) constitute a G-alpha domain. The interval 40-53 (KLLLLGAGESGKST) is G1 motif. Positions 48, 49, 50, 51, 52, 53, 162, 187, 188, 193, 221, 287, 288, 290, and 355 each coordinate GTP. Mg(2+) is bound at residue Ser52. A G2 motif region spans residues 185-193 (DVLYARVRT). Residue Thr193 coordinates Mg(2+). The tract at residues 214 to 223 (YRLFDVGGQR) is G3 motif. Residues 283–290 (MLFLNKFD) are G4 motif. The G5 motif stretch occupies residues 353 to 358 (TTALDQ).

The protein belongs to the G-alpha family. As to quaternary structure, g proteins are composed of 3 units; alpha, beta and gamma. The alpha chain contains the guanine nucleotide binding site. Interacts with RGS1, THF1, the pirin protein PRN1, GTG1 and GTG2. Binds to GCR1. May interact with ADT3. No interactions with RACK1A, RACK1B or RACK1C. Interacts with PLDALPHA1. Interacts with CAND2/PMTR1. It depends on Mg(2+) as a cofactor. In terms of tissue distribution, more abundant in roots and/or leaves.

The protein resides in the cell membrane. In terms of biological role, exhibits a fast rate of basal nucleotide exchange. Guanine nucleotide-binding proteins (G proteins) are involved as modulators or transducers in various transmembrane signaling systems. Together with GCR1, may regulate the cell cycle via a signaling cascade that uses phosphatidylinositol-specific phospholipase C (PI-PLC) as an effector and inositol 1,4,5-trisphosphate (IP(3)) as a second messenger. Promotes abscisic acid (ABA) responses in guard cells. Involved in the blue light (BL) signaling. Together with GCR1 and ADT3, required for BL-mediated synthesis of phenylpyruvate and subsequently of phenylalanine (Phe), in etiolated seedlings. Modulates root architecture (e.g. lateral root formation). Negatively regulated by RGS1. In collaboration with CAND2/PMTR1, regulates the melatonin-mediated stomatal closure involving H(2)O(2) and Ca(2+) signals. In Arabidopsis thaliana (Mouse-ear cress), this protein is Guanine nucleotide-binding protein alpha-1 subunit.